We begin with the raw amino-acid sequence, 635 residues long: MAKWTINDSSKIYNIDNWGAELFSINKKGNVCVHPSPNSKYSIDLKVLVDDLIKRKIKPPILLRFMNILEGRIASISRVFKNAISDNNYPAKYQTFYPIKVNQQRQVVEAIANFGKKYNIGLEVGSKPELVAAISMSTGNNLPILCNGYKDTEFIETVLFATRVGYDITIVVEKLFELEKIVEVSKRTGIVPKLGIRVKLSSKGIGKWSTSGGDDAKFGLRISELIAAIEMLKQNDMLDSVKLLHFHVGSQITKIDKIKNALIEGTRIYAEMRKLGVNLEFLDIGGGLGVDYDGSKSSYFSSVNYSLEEYANDVIYQVKNICDDAGVPCPNIISESGRATVAHYSVLVTDVLNNNTQTLMPDFESILTESEKLSPTVKKLVDIYKSIDKHSLREDYHDTIQLIQESVSLFNLGYLNMAERANAEWICSKIIRKINSIVEKMKPIPDELQNFQLSLRQTYFANFSLFQSIPDSWAIDQLFPIVPIQRLDEKPDVLTSIADITCDSDGEITSFVGENGRTKALPLHKIKVDEQYYIGFFLIGAYQEILGDMHNLFGDTNAVHITFNKKTNYKIDTVITGDATWESLKYVQYDSQEILKRVRNNLEKDVSLQKVSIEESSHFLELLDKTLQSYTYLGE.

The residue at position 100 (Lys100) is an N6-(pyridoxal phosphate)lysine. 282-292 provides a ligand contact to substrate; the sequence is LDIGGGLGVDY.

This sequence belongs to the Orn/Lys/Arg decarboxylase class-II family. SpeA subfamily. Mg(2+) is required as a cofactor. It depends on pyridoxal 5'-phosphate as a cofactor.

The catalysed reaction is L-arginine + H(+) = agmatine + CO2. It participates in amine and polyamine biosynthesis; agmatine biosynthesis; agmatine from L-arginine: step 1/1. Its function is as follows. Catalyzes the biosynthesis of agmatine from arginine. The chain is Biosynthetic arginine decarboxylase from Geobacter sp. (strain M21).